An 826-amino-acid polypeptide reads, in one-letter code: 1,4-alpha-glucan-branching enzyme 1, chloroplastic/amyloplastic (826 aa).

The N-terminal 58 residues, 1–58 (ATTTTTTHNSKNKQYLAKQKPVELTLGYQNPNGCKVCSFGSKGSIYQKVSSGFKGVSV), are a transit peptide targeting the chloroplast. D409 serves as the catalytic Nucleophile. E464 functions as the Proton donor in the catalytic mechanism. Positions 782–813 (DTDVARIPDVSMESEDSNLDRIEDNSEDAVDA) are disordered.

Belongs to the glycosyl hydrolase 13 family. GlgB subfamily. In terms of assembly, monomer. Expressed in roots, leaves, stipules, pods and flowers.

The protein localises to the plastid. Its subcellular location is the chloroplast. The protein resides in the amyloplast. It catalyses the reaction Transfers a segment of a (1-&gt;4)-alpha-D-glucan chain to a primary hydroxy group in a similar glucan chain.. Its pathway is glycan biosynthesis; starch biosynthesis. Catalyzes the formation of the alpha-1,6-glucosidic linkages in starch by scission of a 1,4-alpha-linked oligosaccharide from growing alpha-1,4-glucan chains and the subsequent attachment of the oligosaccharide to the alpha-1,6 position. May preferentially transfer long chains during branching. The polypeptide is 1,4-alpha-glucan-branching enzyme 1, chloroplastic/amyloplastic (SBEII) (Pisum sativum (Garden pea)).